The sequence spans 203 residues: MANYYDITLALAGVCQAAKLVQQFAHEGQADQAAFETSLNTLLQIYPEDTLAVFGGKAQNLKLGLETLLEQMHGTGSDLSRYWISLLALESKLNKDPHAKAELARRIQYLPTQLEHYDLLDEQMLSTLASIYVDVISPLGKKIQVTGSTLYLQQLAMHHRIRACLLAGIRSAVLWRQVGGTKWQVLFSRRKIIAMAKQIYSSL.

It belongs to the HflD family.

The protein resides in the cytoplasm. It is found in the cell inner membrane. The sequence is that of High frequency lysogenization protein HflD homolog from Pasteurella multocida (strain Pm70).